The following is a 251-amino-acid chain: Adenosine 5'-phosphosulfate reductase (251 aa).

Residues C121, C122, C204, and C207 each contribute to the [4Fe-4S] cluster site. The active-site Nucleophile; cysteine thiosulfonate intermediate is the C232.

Belongs to the PAPS reductase family. CysH subfamily. It depends on [4Fe-4S] cluster as a cofactor.

Its subcellular location is the cytoplasm. It carries out the reaction [thioredoxin]-disulfide + sulfite + AMP + 2 H(+) = adenosine 5'-phosphosulfate + [thioredoxin]-dithiol. The protein operates within sulfur metabolism; hydrogen sulfide biosynthesis; sulfite from sulfate. In terms of biological role, catalyzes the formation of sulfite from adenosine 5'-phosphosulfate (APS) using thioredoxin as an electron donor. The chain is Adenosine 5'-phosphosulfate reductase from Sinorhizobium fredii (strain NBRC 101917 / NGR234).